Here is a 457-residue protein sequence, read N- to C-terminus: UDP-N-acetylmuramate--L-alanine ligase (457 aa).

Residue 109–115 (GTDGKTT) participates in ATP binding.

It belongs to the MurCDEF family.

It localises to the cytoplasm. The catalysed reaction is UDP-N-acetyl-alpha-D-muramate + L-alanine + ATP = UDP-N-acetyl-alpha-D-muramoyl-L-alanine + ADP + phosphate + H(+). It participates in cell wall biogenesis; peptidoglycan biosynthesis. Its function is as follows. Cell wall formation. The polypeptide is UDP-N-acetylmuramate--L-alanine ligase (Thermotoga petrophila (strain ATCC BAA-488 / DSM 13995 / JCM 10881 / RKU-1)).